Reading from the N-terminus, the 140-residue chain is Cell division protein SepF (140 aa).

Positions 15–47 (DSQYEEPTEASQAAAPTESATNTRSTPKVVPMQ) are disordered.

Belongs to the SepF family. In terms of assembly, homodimer. Interacts with FtsZ.

It localises to the cytoplasm. Functionally, cell division protein that is part of the divisome complex and is recruited early to the Z-ring. Probably stimulates Z-ring formation, perhaps through the cross-linking of FtsZ protofilaments. Its function overlaps with FtsA. The protein is Cell division protein SepF of Lactiplantibacillus plantarum (strain ATCC BAA-793 / NCIMB 8826 / WCFS1) (Lactobacillus plantarum).